We begin with the raw amino-acid sequence, 431 residues long: Signal recognition particle 54 kDa protein (431 aa).

GTP is bound by residues 105–112, 185–189, and 243–246; these read GVEGSGKT, DTAGR, and TKMD.

The protein belongs to the GTP-binding SRP family. SRP54 subfamily. Part of the signal recognition particle protein translocation system, which is composed of SRP and FtsY. Archaeal SRP consists of a 7S RNA molecule of 300 nucleotides and two protein subunits: SRP54 and SRP19.

The protein resides in the cytoplasm. It catalyses the reaction GTP + H2O = GDP + phosphate + H(+). Involved in targeting and insertion of nascent membrane proteins into the cytoplasmic membrane. Binds to the hydrophobic signal sequence of the ribosome-nascent chain (RNC) as it emerges from the ribosomes. The SRP-RNC complex is then targeted to the cytoplasmic membrane where it interacts with the SRP receptor FtsY. The protein is Signal recognition particle 54 kDa protein of Pyrobaculum calidifontis (strain DSM 21063 / JCM 11548 / VA1).